Consider the following 136-residue polypeptide: Transcription antitermination protein NusB (136 aa).

This sequence belongs to the NusB family.

Involved in transcription antitermination. Required for transcription of ribosomal RNA (rRNA) genes. Binds specifically to the boxA antiterminator sequence of the ribosomal RNA (rrn) operons. This Salinispora arenicola (strain CNS-205) protein is Transcription antitermination protein NusB.